Here is a 112-residue protein sequence, read N- to C-terminus: MEITITSQTENVLLNRKEIGFSITFTGATPSRKMVHAKLAAMLSAPKDQLVIGSLHNRFGLTEITGDARVYTSAEYLKKIEPEYIRKRGMAGEEEGNADAQDAPSGDAAEAS.

Residues 88–112 (RGMAGEEEGNADAQDAPSGDAAEAS) form a disordered region.

The protein belongs to the eukaryotic ribosomal protein eS24 family.

This is Small ribosomal subunit protein eS24 from Methanospirillum hungatei JF-1 (strain ATCC 27890 / DSM 864 / NBRC 100397 / JF-1).